The chain runs to 118 residues: BLOC-1-related complex subunit 8 (118 aa).

The span at 98–107 (KEQISNSQGR) shows a compositional bias: polar residues. The interval 98 to 118 (KEQISNSQGRSPHVSAPSASS) is disordered.

Belongs to the BORCS8 family.

Its subcellular location is the lysosome membrane. In terms of biological role, as part of a BORC-like complex, it may play a role in the movement and localization of lysosomes at the cell periphery. Associated with the cytosolic face of lysosomes, this complex may couple lysosomes to microtubule plus-end-directed kinesin motors, driving lysosome movement toward the cell periphery. This chain is BLOC-1-related complex subunit 8, found in Tetraodon nigroviridis (Spotted green pufferfish).